The sequence spans 362 residues: MLCVNVELKERRYPIYIGSGLLSDEKCYPLKSGDKVMIVTNPTIAQYYLSQVTDTLVKKGCLVEHVVLSDGEQYKTLDSLNLIFTALLQGNHGRDTTIIALGGGVIGDVAGYAAASYQRGVRFIQIPTTLLAQVDSSVGGKTAVNHALGKNMIGAFYQPCTVIIDTLTLNSLPKREINAGLAEVIKYGAILDLPFFTWLEQNIDSLVARDPDNLQTCIARCCQIKADVVARDETEKGDRALLNLGHTFGHAIETHLGYGHWLHGEAVAVGMLMAAVLSEKLGNLTKTDVARLERLLARANLPTVSPDTMQPEDYLPHMLRDKKVLAGKLRLVLLASLGQAYVATDTDPALVLDAIRCCTQVN.

Residues 70 to 75 (DGEQYK), 104 to 108 (GVIGD), 128 to 129 (TT), Lys141, and Lys150 contribute to the NAD(+) site. Residues Glu183, His246, and His263 each contribute to the Zn(2+) site.

The protein belongs to the sugar phosphate cyclases superfamily. Dehydroquinate synthase family. NAD(+) is required as a cofactor. Co(2+) serves as cofactor. Requires Zn(2+) as cofactor.

Its subcellular location is the cytoplasm. The catalysed reaction is 7-phospho-2-dehydro-3-deoxy-D-arabino-heptonate = 3-dehydroquinate + phosphate. The protein operates within metabolic intermediate biosynthesis; chorismate biosynthesis; chorismate from D-erythrose 4-phosphate and phosphoenolpyruvate: step 2/7. Its function is as follows. Catalyzes the conversion of 3-deoxy-D-arabino-heptulosonate 7-phosphate (DAHP) to dehydroquinate (DHQ). The sequence is that of 3-dehydroquinate synthase from Pasteurella multocida (strain Pm70).